A 387-amino-acid chain; its full sequence is 4-hydroxy-3-methylbut-2-en-1-yl diphosphate synthase (flavodoxin) (387 aa).

Positions 293, 296, 328, and 335 each coordinate [4Fe-4S] cluster.

Belongs to the IspG family. Requires [4Fe-4S] cluster as cofactor.

The catalysed reaction is (2E)-4-hydroxy-3-methylbut-2-enyl diphosphate + oxidized [flavodoxin] + H2O + 2 H(+) = 2-C-methyl-D-erythritol 2,4-cyclic diphosphate + reduced [flavodoxin]. The protein operates within isoprenoid biosynthesis; isopentenyl diphosphate biosynthesis via DXP pathway; isopentenyl diphosphate from 1-deoxy-D-xylulose 5-phosphate: step 5/6. Converts 2C-methyl-D-erythritol 2,4-cyclodiphosphate (ME-2,4cPP) into 1-hydroxy-2-methyl-2-(E)-butenyl 4-diphosphate. This chain is 4-hydroxy-3-methylbut-2-en-1-yl diphosphate synthase (flavodoxin), found in Treponema denticola (strain ATCC 35405 / DSM 14222 / CIP 103919 / JCM 8153 / KCTC 15104).